The following is a 291-amino-acid chain: Phosphatidylglycerol--prolipoprotein diacylglyceryl transferase (291 aa).

A run of 7 helical transmembrane segments spans residues 21–41 (VSLHWYGLMYLVGFVFAMWLA), 60–80 (LLYAGFLGVFLGGRIGYVLFY), 96–116 (WDGGMSFHGGLIGVILVMIIF), 130–150 (FIAPLIPFGLGAGRLGNFING), 198–218 (SQLYELALEGVVLFLILNLFI), 225–245 (GSVSGLFLIGYGLFRIIVEFF), and 260–280 (ISMGQILSIPMVLAGIIMMVW). R143 lines the a 1,2-diacyl-sn-glycero-3-phospho-(1'-sn-glycerol) pocket.

It belongs to the Lgt family.

It is found in the cell inner membrane. The enzyme catalyses L-cysteinyl-[prolipoprotein] + a 1,2-diacyl-sn-glycero-3-phospho-(1'-sn-glycerol) = an S-1,2-diacyl-sn-glyceryl-L-cysteinyl-[prolipoprotein] + sn-glycerol 1-phosphate + H(+). It participates in protein modification; lipoprotein biosynthesis (diacylglyceryl transfer). Functionally, catalyzes the transfer of the diacylglyceryl group from phosphatidylglycerol to the sulfhydryl group of the N-terminal cysteine of a prolipoprotein, the first step in the formation of mature lipoproteins. This Klebsiella pneumoniae (strain 342) protein is Phosphatidylglycerol--prolipoprotein diacylglyceryl transferase.